Reading from the N-terminus, the 470-residue chain is mRNA export factor ICP27 homolog (470 aa).

Disordered regions lie at residues 1–31 (MALS…TGGD) and 62–204 (VGDP…DRLN). Over residues 71 to 85 (VSFSASPQRAQPSNP) the composition is skewed to polar residues. Composition is skewed to basic residues over residues 94–107 (HGRR…RRNN) and 178–187 (RVHRNRRRGN). Cys359, His437, Cys441, and Cys446 together coordinate Zn(2+). The CHC2-type zinc-finger motif lies at 359–446 (CYLSSSGSPT…HKRRCKADTC (88 aa)).

The protein belongs to the HHV-1 ICP27 protein family. In terms of assembly, homodimer. Homodimerization is required for transactivation. Associates in a complex with RNA, and host export factors NXF1/TAP and ALYREF; these interactions allow nuclear export of viral transcripts. Interacts with three host shuttling SR proteins SRSF1, SRSF3 and SRSF7. Interacts with host SRPK1. Interacts with IE62; this interaction enhances IE62 transactivation.

The protein resides in the host cytoplasm. The protein localises to the host nucleus. Functionally, multifunctional regulator of the expression of viral genes that mediates nuclear export of viral intronless mRNAs. This immediate early (EI) protein promotes the nuclear export of viral intronless mRNAs by interacting with mRNAs and host NXF1/TAP. The protein is mRNA export factor ICP27 homolog of Equine herpesvirus 1 (strain Ab4p) (EHV-1).